A 321-amino-acid polypeptide reads, in one-letter code: GTP 3',8-cyclase (321 aa).

In terms of domain architecture, Radical SAM core spans 5–233 (SFNRVIDYIR…QGSSKIYTLE (229 aa)). Arg14 contributes to the GTP binding site. The [4Fe-4S] cluster site is built by Cys21 and Cys25. Tyr27 is a binding site for S-adenosyl-L-methionine. Cys28 lines the [4Fe-4S] cluster pocket. GTP is bound at residue Arg64. Gly68 is an S-adenosyl-L-methionine binding site. A GTP-binding site is contributed by Ser95. Residue Ser119 coordinates S-adenosyl-L-methionine. Residue Lys155 participates in GTP binding. Met189 is a binding site for S-adenosyl-L-methionine. The [4Fe-4S] cluster site is built by Cys249 and Cys252. 254–256 (RIR) is a GTP binding site. Cys266 contacts [4Fe-4S] cluster.

Belongs to the radical SAM superfamily. MoaA family. Monomer and homodimer. Requires [4Fe-4S] cluster as cofactor.

The enzyme catalyses GTP + AH2 + S-adenosyl-L-methionine = (8S)-3',8-cyclo-7,8-dihydroguanosine 5'-triphosphate + 5'-deoxyadenosine + L-methionine + A + H(+). It functions in the pathway cofactor biosynthesis; molybdopterin biosynthesis. Its function is as follows. Catalyzes the cyclization of GTP to (8S)-3',8-cyclo-7,8-dihydroguanosine 5'-triphosphate. This is GTP 3',8-cyclase from Helicobacter pylori (strain HPAG1).